The primary structure comprises 232 residues: Clarin-2 (232 aa).

The next 4 membrane-spanning stretches (helical) occupy residues 8–28 (VWYG…IVAL), 101–121 (ILLL…FAIL), 139–159 (LWNV…MAAV), and 188–208 (SFWI…VVAI).

This sequence belongs to the clarin family. In terms of tissue distribution, detected in inner ear, particularly in hair bundles of auditory hair cells and is enriched in apical stereocilia. Detected in eye, but not in brain or muscle.

The protein resides in the cell projection. It localises to the stereocilium membrane. Its function is as follows. Plays a key role to hearing function. Required for normal organization and maintenance of the stereocilia bundle and for mechano-electrical transduction. This is Clarin-2 from Mus musculus (Mouse).